The sequence spans 633 residues: tRNA uridine 5-carboxymethylaminomethyl modification enzyme MnmG (633 aa).

Residues 15–20, V127, and S182 contribute to the FAD site; that span reads GAGHAG. 276–290 is an NAD(+) binding site; the sequence is GPRYCPSIEDKIVRF. Q373 provides a ligand contact to FAD.

This sequence belongs to the MnmG family. Homodimer. Heterotetramer of two MnmE and two MnmG subunits. FAD serves as cofactor.

Its subcellular location is the cytoplasm. In terms of biological role, NAD-binding protein involved in the addition of a carboxymethylaminomethyl (cmnm) group at the wobble position (U34) of certain tRNAs, forming tRNA-cmnm(5)s(2)U34. The protein is tRNA uridine 5-carboxymethylaminomethyl modification enzyme MnmG of Streptococcus thermophilus (strain CNRZ 1066).